The following is a 225-amino-acid chain: UPF0758 protein BCG9842_B0662 (225 aa).

An MPN domain is found at 103–225 (SIRSPEDCAK…FVSLKEKGHI (123 aa)). Residues His-174, His-176, and Asp-187 each contribute to the Zn(2+) site. The JAMM motif signature appears at 174–187 (HNHPSGDPTPSRED).

This sequence belongs to the UPF0758 family.

The sequence is that of UPF0758 protein BCG9842_B0662 from Bacillus cereus (strain G9842).